The following is an 81-amino-acid chain: Photosystem I iron-sulfur center (81 aa).

2 consecutive 4Fe-4S ferredoxin-type domains span residues 2-31 and 39-68; these read SHAV…MVPW and IASS…IRVY. 8 residues coordinate [4Fe-4S] cluster: cysteine 11, cysteine 14, cysteine 17, cysteine 21, cysteine 48, cysteine 51, cysteine 54, and cysteine 58.

In terms of assembly, the cyanobacterial PSI reaction center is composed of one copy each of PsaA,B,C,D,E,F,I,J,K,L,M and X, and forms trimeric complexes. [4Fe-4S] cluster is required as a cofactor.

It is found in the cellular thylakoid membrane. It catalyses the reaction reduced [plastocyanin] + hnu + oxidized [2Fe-2S]-[ferredoxin] = oxidized [plastocyanin] + reduced [2Fe-2S]-[ferredoxin]. Apoprotein for the two 4Fe-4S centers FA and FB of photosystem I (PSI); essential for photochemical activity. FB is the terminal electron acceptor of PSI, donating electrons to ferredoxin. The C-terminus interacts with PsaA/B/D and helps assemble the protein into the PSI complex. Required for binding of PsaD and PsaE to PSI. PSI is a plastocyanin/cytochrome c6-ferredoxin oxidoreductase, converting photonic excitation into a charge separation, which transfers an electron from the donor P700 chlorophyll pair to the spectroscopically characterized acceptors A0, A1, FX, FA and FB in turn. This chain is Photosystem I iron-sulfur center, found in Prochlorococcus marinus (strain MIT 9312).